The sequence spans 662 residues: uncharacterized protein (662 aa).

This is an uncharacterized protein from Ictalurid herpesvirus 1 (strain Auburn) (IcHV-1).